A 257-amino-acid chain; its full sequence is Receptor expression-enhancing protein 4 (257 aa).

2 helical membrane passes run 1–21 and 42–62; these read MVSW…YPAY and WIVF…ISWF. 2 positions are modified to phosphoserine: Ser152 and Ser194. Residues 159–257 are disordered; the sequence is IPDTSAPTYQ…KKTIPSDLDS (99 aa). Thr196 is modified (phosphothreonine). The residue at position 202 (Ser202) is a Phosphoserine. Thr250 is modified (phosphothreonine). At Ser253 the chain carries Phosphoserine.

It belongs to the DP1 family.

It localises to the endoplasmic reticulum membrane. Functionally, microtubule-binding protein required to ensure proper cell division and nuclear envelope reassembly by sequestering the endoplasmic reticulum away from chromosomes during mitosis. Probably acts by clearing the endoplasmic reticulum membrane from metaphase chromosomes. This Rattus norvegicus (Rat) protein is Receptor expression-enhancing protein 4 (Reep4).